The primary structure comprises 67 residues: Beta-defensin 103 (67 aa).

The N-terminal stretch at 1-22 (MRIHYLLFALLFLFLVPVPGHG) is a signal peptide. 3 disulfide bridges follow: C33/C62, C40/C55, and C45/C63.

Highly expressed in skin and tonsils, and to a lesser extent in trachea, uterus, kidney, thymus, adenoid, pharynx and tongue. Low expression in salivary gland, bone marrow, colon, stomach, polyp and larynx. No expression in small intestine.

The protein localises to the secreted. Exhibits antimicrobial activity against Gram-positive bacteria S.aureus and S.pyogenes, Gram-negative bacteria P.aeruginosa and E.coli and the yeast C.albicans. Kills multiresistant S.aureus and vancomycin-resistant E.faecium. No significant hemolytic activity was observed. This Homo sapiens (Human) protein is Beta-defensin 103 (DEFB103A).